A 368-amino-acid polypeptide reads, in one-letter code: p21-activated protein kinase-interacting protein 1-like (368 aa).

WD repeat units follow at residues 45 to 82 (AHTA…EHGA), 85 to 123 (HHDG…CLKT), 126 to 165 (AHKG…SAFI), 207 to 245 (AFTK…CVCE), and 248 to 289 (AHEN…IESP).

It is found in the nucleus. The protein resides in the nucleolus. Negatively regulates the PAK1 kinase. PAK1 is a member of the PAK kinase family, which has been shown to play a positive role in the regulation of signaling pathways involving MAPK8 and RELA. PAK1 exists as an inactive homodimer, which is activated by binding of small GTPases such as CDC42 to an N-terminal regulatory domain. PAK1IP1 also binds to the N-terminus of PAK1, and inhibits the specific activation of PAK1 by CDC42. May be involved in ribosomal large subunit assembly. The chain is p21-activated protein kinase-interacting protein 1-like (pak1ip1) from Danio rerio (Zebrafish).